The primary structure comprises 158 residues: MPLYECVLIARSEITQQQVDTIADAVTAQVESESGAVKKREYWGLRNLAYRIKKNRKGHYVLLGLDAEPATISEMERQLGLNEDVLRFMTVRVEDIDEAPSAPLARRGEDRDRDRGFRGPKPAGRFDSGRRRGADDREEYRARDEYRSDRDEDQNEEN.

The interval 98–158 (EAPSAPLARR…DRDEDQNEEN (61 aa)) is disordered. Composition is skewed to basic and acidic residues over residues 106–117 (RRGEDRDRDRGF) and 127–150 (DSGRRRGADDREEYRARDEYRSDR).

Belongs to the bacterial ribosomal protein bS6 family.

Functionally, binds together with bS18 to 16S ribosomal RNA. The chain is Small ribosomal subunit protein bS6 from Acidiphilium cryptum (strain JF-5).